Consider the following 495-residue polypeptide: Ectonucleoside triphosphate diphosphohydrolase 2 (495 aa).

The Cytoplasmic portion of the chain corresponds to 2–4; it reads ARR. The helical transmembrane segment at 5–25 threads the bilayer; sequence AAAVLLLLALGCLLGILLLCL. Residues 26 to 465 lie on the Extracellular side of the membrane; that stretch reads GSGDARGPPS…SHRSMLYNYW (440 aa). N62 carries N-linked (GlcNAc...) asparagine glycosylation. An intrachain disulfide couples C73 to C97. The Proton acceptor role is filled by E162. ATP is bound at residue 201–205; sequence GASTQ. 4 disulfides stabilise this stretch: C239/C286, C267/C311, C324/C329, and C378/C400. A glycan (N-linked (GlcNAc...) asparagine) is linked at N297. N418 and N444 each carry an N-linked (GlcNAc...) asparagine glycan. Residues 466–486 form a helical membrane-spanning segment; the sequence is VILILLFVITTLTALLTAVYL. Over 487–495 the chain is Cytoplasmic; the sequence is LRRSKSSTI.

Belongs to the GDA1/CD39 NTPase family. It depends on Ca(2+) as a cofactor. The cofactor is Mg(2+).

It localises to the membrane. In terms of biological role, in the nervous system, could hydrolyze ATP and other nucleotides to regulate purinergic neurotransmission. Hydrolyzes ADP only to a marginal extent. The polypeptide is Ectonucleoside triphosphate diphosphohydrolase 2 (ENTPD2) (Gallus gallus (Chicken)).